Here is a 621-residue protein sequence, read N- to C-terminus: Probable serine/threonine-protein kinase WNK2 (621 aa).

Positions 28–286 (GRYTEVLGKG…AQELLMDPFL (259 aa)) constitute a Protein kinase domain. ATP is bound by residues 108–111 (TEVF) and Lys-158. Residue Asp-175 is the Proton acceptor of the active site. Disordered regions lie at residues 438-490 (SVEN…SDSP), 501-520 (VEPH…NDTD), 527-553 (GTSV…SPQS), and 600-621 (HREE…SDKP).

This sequence belongs to the protein kinase superfamily. Ser/Thr protein kinase family. WNK subfamily.

It catalyses the reaction L-seryl-[protein] + ATP = O-phospho-L-seryl-[protein] + ADP + H(+). It carries out the reaction L-threonyl-[protein] + ATP = O-phospho-L-threonyl-[protein] + ADP + H(+). This Oryza sativa subsp. japonica (Rice) protein is Probable serine/threonine-protein kinase WNK2 (WNK2).